We begin with the raw amino-acid sequence, 467 residues long: Glutamate--tRNA ligase (467 aa).

A 'HIGH' region motif is present at residues P9 to S19. The 'KMSKS' region signature appears at K237–R241. K240 contributes to the ATP binding site.

The protein belongs to the class-I aminoacyl-tRNA synthetase family. Glutamate--tRNA ligase type 1 subfamily. Monomer.

It localises to the cytoplasm. It carries out the reaction tRNA(Glu) + L-glutamate + ATP = L-glutamyl-tRNA(Glu) + AMP + diphosphate. Catalyzes the attachment of glutamate to tRNA(Glu) in a two-step reaction: glutamate is first activated by ATP to form Glu-AMP and then transferred to the acceptor end of tRNA(Glu). This Buchnera aphidicola subsp. Acyrthosiphon pisum (strain APS) (Acyrthosiphon pisum symbiotic bacterium) protein is Glutamate--tRNA ligase.